The sequence spans 183 residues: Ribonuclease H (183 aa).

An RNase H type-1 domain is found at 2–151; that stretch reads SQARFIAFSD…VDQLAQAAAR (150 aa). Mg(2+)-binding residues include D11, E57, D79, and D143.

Belongs to the RNase H family. Monomer. Requires Mg(2+) as cofactor.

It localises to the cytoplasm. It catalyses the reaction Endonucleolytic cleavage to 5'-phosphomonoester.. Endonuclease that specifically degrades the RNA of RNA-DNA hybrids. This Anaeromyxobacter dehalogenans (strain 2CP-1 / ATCC BAA-258) protein is Ribonuclease H.